The primary structure comprises 293 residues: NAD kinase (293 aa).

Residue Asp72 is the Proton acceptor of the active site. Residues 72–73 (DG), 146–147 (ND), Arg157, Arg174, Asp176, 187–192 (TAYALS), and Gln247 each bind NAD(+).

The protein belongs to the NAD kinase family. A divalent metal cation serves as cofactor.

Its subcellular location is the cytoplasm. The enzyme catalyses NAD(+) + ATP = ADP + NADP(+) + H(+). Its function is as follows. Involved in the regulation of the intracellular balance of NAD and NADP, and is a key enzyme in the biosynthesis of NADP. Catalyzes specifically the phosphorylation on 2'-hydroxyl of the adenosine moiety of NAD to yield NADP. This chain is NAD kinase, found in Teredinibacter turnerae (strain ATCC 39867 / T7901).